Reading from the N-terminus, the 328-residue chain is Homoarginine-6-hydroxylase 2-ODD-233 (328 aa).

Residues 183–288 (FWVCRLIGYP…VSVAFFYESN (106 aa)) form the Fe2OG dioxygenase domain. Fe cation-binding residues include H210, D212, and H268. Position 278 (R278) interacts with 2-oxoglutarate.

The protein belongs to the iron/ascorbate-dependent oxidoreductase family. Fe(2+) is required as a cofactor. The cofactor is L-ascorbate. Expressed in roots and shoots.

The protein localises to the cytoplasm. The enzyme catalyses L-homoarginine + 2-oxoglutarate + O2 = 6-hydroxy-L-homoarginine + succinate + CO2. It carries out the reaction melatonin + 2-oxoglutarate + O2 = 2-hydroxymelatonin + succinate + CO2. Its function is as follows. 2-oxoglutarate-dependent dioxygenase catalyzing homoarginine 6-hydroxylation thus producing 6-hydroxy-L-homoarginine. Guanidine (Gd) is in turn synthesized by the spontaneous conversion of 6-hydroxy-L-homoarginine to (S)-2-amino-6-oxohexanoate (RHEA:79843); guanidine is a nitrogen-rich compound that can serve as a defense or signaling substance. Involved in melatonin degradation. Catalyzes the hydroxylation of melatonin to produce 2-hydroxymelatonin. In Oryza sativa subsp. japonica (Rice), this protein is Homoarginine-6-hydroxylase 2-ODD-233.